Here is a 62-residue protein sequence, read N- to C-terminus: Beta-defensin 110 (62 aa).

Positions 1–21 (MKIHLFFFILLFWVTILPARS) are cleaved as a signal peptide. 3 cysteine pairs are disulfide-bonded: Cys32–Cys60, Cys39–Cys53, and Cys43–Cys61.

The protein belongs to the beta-defensin family.

It is found in the secreted. Has antibacterial activity. This is Beta-defensin 110 (DEFB110) from Canis lupus familiaris (Dog).